Consider the following 332-residue polypeptide: MNPWRRYSWEIALAALLIFEILAFGLINPRLLDINVLLFSTSDFICIGIVALPLTMVIVSGGMDISFGSTIGLCAITLGVLFQLGMPLPLAIIITLLLGAICGLINAGLIIYTGVNPLVITLGTMYLFGGSALLLSGMAGATGYEGIGGFPTAFTDFANISFLGIPMPLIFFLVCCLFFWLLMHRTHMGRNVFLIGQSARVAQYSAIPVNRTLYTVYAMTGCASAIAAVLLVSYFGSARSDLGASFLMPAITAVVLGGANIYGGSGSIMGSALAALLVGFLQQGLQMAGVPNQISSALSGALLIVVVVGRSVSLHRHQILEWYSRRRNAHQA.

10 helical membrane passes run 7 to 27 (YSWE…FGLI), 45 to 65 (ICIG…GMDI), 70 to 90 (TIGL…PLPL), 91 to 111 (AIII…GLII), 118 to 138 (LVIT…LSGM), 162 to 182 (FLGI…FWLL), 216 to 236 (VYAM…SYFG), 240 to 260 (SDLG…GGAN), 261 to 281 (IYGG…VGFL), and 288 to 308 (AGVP…VVVV).

This sequence belongs to the binding-protein-dependent transport system permease family. AraH/RbsC subfamily. In terms of assembly, the complex is composed of two ATP-binding proteins (LsrA), two transmembrane proteins (LsrC and LsrD) and a solute-binding protein (LsrB).

Its subcellular location is the cell inner membrane. Functionally, part of the ABC transporter complex LsrABCD involved in autoinducer 2 (AI-2) import. Probably responsible for the translocation of the substrate across the membrane. The chain is Autoinducer 2 import system permease protein LsrD (lsrD) from Salmonella paratyphi B (strain ATCC BAA-1250 / SPB7).